Consider the following 300-residue polypeptide: PTB domain-containing engulfment adapter protein 1 (300 aa).

One can recognise a PID domain in the interval 21–176 (AKHFIPYNAK…GGLQKRIQDL (156 aa)). A coiled-coil region spans residues 160-199 (VETRKQIGGLQKRIQDLETENVELKKQLQVLEEQLMIAQV).

The protein belongs to the ced-6 family.

Its subcellular location is the cytoplasm. In terms of biological role, may function as an adapter protein. Required for efficient phagocytosis of apoptotic cells. May play a role in the internalization and endosomal trafficking of various lrp1 ligands. This is PTB domain-containing engulfment adapter protein 1 (gulp1) from Danio rerio (Zebrafish).